A 253-amino-acid chain; its full sequence is Indole-3-glycerol phosphate synthase (253 aa).

The protein belongs to the TrpC family.

The catalysed reaction is 1-(2-carboxyphenylamino)-1-deoxy-D-ribulose 5-phosphate + H(+) = (1S,2R)-1-C-(indol-3-yl)glycerol 3-phosphate + CO2 + H2O. It participates in amino-acid biosynthesis; L-tryptophan biosynthesis; L-tryptophan from chorismate: step 4/5. This Bacillus anthracis (strain A0248) protein is Indole-3-glycerol phosphate synthase.